The chain runs to 90 residues: Large ribosomal subunit protein eL33 (90 aa).

Belongs to the eukaryotic ribosomal protein eL33 family.

The chain is Large ribosomal subunit protein eL33 from Methanopyrus kandleri (strain AV19 / DSM 6324 / JCM 9639 / NBRC 100938).